The chain runs to 622 residues: Calmodulin-binding protein 60 C (622 aa).

The segment covering 1–19 has biased composition (basic and acidic residues); that stretch reads MQTRYMERTNSMREKRKLE. The segment at 1-35 is disordered; the sequence is MQTRYMERTNSMREKRKLEEDDNQQQQQQPERKRP. The segment at 10–89 is calmodulin-binding; that stretch reads NSMREKRKLE…RLSERSSPKR (80 aa). The interval 159–282 is DNA-binding; that stretch reads EDDDGWSGEE…AFHKKLNKAG (124 aa).

It belongs to the plant ACBP60 protein family. Interacts with calmodulin (CaM). Expressed in stems, flowers and root.

Its subcellular location is the nucleus. Functionally, transcription activator that binds DNA in a sequence-specific manner, likely 5'-GAAATTTTGG-3', to promote the expression of target genes. The sequence is that of Calmodulin-binding protein 60 C from Arabidopsis thaliana (Mouse-ear cress).